Reading from the N-terminus, the 1189-residue chain is Nucleolar protein NET1 (1189 aa).

Phosphoserine is present on residues serine 60 and serine 166. 2 disordered regions span residues 160-260 (SKLN…ISSG) and 345-1189 (TAQD…FKKK). Low complexity predominate over residues 166–180 (SPQSVQPQQQIPSSS). Over residues 200-210 (IRSATNGSMRV) the composition is skewed to polar residues. Residues serine 231 and serine 252 each carry the phosphoserine modification. The span at 244 to 253 (LPPPTQPQSP) shows a compositional bias: pro residues. Residues 368-381 (PEPRISEIEKELKE) show a composition bias toward basic and acidic residues. Over residues 391–407 (PAKAAKIPMKKPYLENG) the composition is skewed to low complexity. The span at 432-450 (ASLQRSQSSIADNNGSPVK) shows a compositional bias: polar residues. Serine 437, serine 439, serine 447, and serine 452 each carry phosphoserine. A compositionally biased stretch (polar residues) spans 470-486 (ASNTSITKSSNGESWGK). Residue serine 497 is modified to Phosphoserine. A compositionally biased stretch (basic and acidic residues) spans 526–543 (NQVREKEDTNDKLLEKEI). The span at 590–601 (IEDDGNDNDEVD) shows a compositional bias: acidic residues. Over residues 641–657 (SRTSGNSKNSKPYTTVL) the composition is skewed to polar residues. Residues 659-668 (KDIDNSKPDP) are compositionally biased toward basic and acidic residues. Threonine 676 carries the post-translational modification Phosphothreonine. Low complexity predominate over residues 682-691 (KRAAQLLAGA). The span at 692-702 (KKNEVPQKSTE) shows a compositional bias: basic and acidic residues. Over residues 710-725 (TDDESESGIETDFSSD) the composition is skewed to acidic residues. The segment covering 756-777 (KDSKIINKEVDEERNDKRDSQK) has biased composition (basic and acidic residues). A compositionally biased stretch (polar residues) spans 778–792 (KSAVSESSVTNSKIS). Residues 806 to 815 (KQNEATKVET) show a composition bias toward basic and acidic residues. A compositionally biased stretch (low complexity) spans 822–833 (SSFPVVGGSPSV). The residue at position 830 (serine 830) is a Phosphoserine. 3 stretches are compositionally biased toward basic and acidic residues: residues 884–897 (DLNK…EPEK), 905–919 (ANDK…DSKS), and 945–954 (ANDKLKDLKA). Over residues 969 to 999 (SNEKNNSSANDDDSSSSGSSTEDESSSSSSS) the composition is skewed to low complexity. Residues 1023–1039 (RSSSKIEAPSPSVNKKI) are compositionally biased toward polar residues. Threonine 1042 is modified (phosphothreonine). The span at 1055–1070 (SSPPSVKSKTTSNPSS) shows a compositional bias: low complexity. Residues serine 1056 and serine 1059 each carry the phosphoserine modification. A compositionally biased stretch (basic and acidic residues) spans 1095–1109 (PDVKEKTSKSNEKSQ). Composition is skewed to low complexity over residues 1123 to 1137 (DSDS…SDSS) and 1158 to 1169 (SFISAKSASAAL).

It to yeast YKR010c. In terms of assembly, component of the RENT complex which is composed of at least NET1, CDC14 and SIR2. Interacts with NSI1. Post-translationally, phosphorylated by CDC5.

It is found in the nucleus. It localises to the nucleolus. Its function is as follows. Has a role in chromosome maintenance and is involved in mitotic exit. Inhibits the action of CDC14 by sequestering it in the nucleolus. Also binds to RNA polymerase I and stimulates rRNA synthesis. Influences RDNA chromatin by tethering SIR2 to rDNA in the nucleolus. The protein is Nucleolar protein NET1 (NET1) of Saccharomyces cerevisiae (strain ATCC 204508 / S288c) (Baker's yeast).